The chain runs to 464 residues: tRNA modification GTPase MnmE (464 aa).

Arginine 27, glutamate 90, and lysine 129 together coordinate (6S)-5-formyl-5,6,7,8-tetrahydrofolate. One can recognise a TrmE-type G domain in the interval 222–384 (GIALVLAGSV…LYDKIRSLTC (163 aa)). Residues 232–237 (NVGKSS), 251–257 (SSYAGTT), and 276–279 (DTAG) contribute to the GTP site. 2 residues coordinate Mg(2+): serine 236 and threonine 257. A (6S)-5-formyl-5,6,7,8-tetrahydrofolate-binding site is contributed by lysine 464.

It belongs to the TRAFAC class TrmE-Era-EngA-EngB-Septin-like GTPase superfamily. TrmE GTPase family. As to quaternary structure, homodimer. Heterotetramer of two MnmE and two MnmG subunits. Requires K(+) as cofactor.

The protein localises to the cytoplasm. Functionally, exhibits a very high intrinsic GTPase hydrolysis rate. Involved in the addition of a carboxymethylaminomethyl (cmnm) group at the wobble position (U34) of certain tRNAs, forming tRNA-cmnm(5)s(2)U34. The protein is tRNA modification GTPase MnmE of Borrelia turicatae (strain 91E135).